The sequence spans 103 residues: Histone H4 (103 aa).

An N6-acetyl-N6-methyllysine; alternate modification is found at K6. N6-methyllysine; alternate occurs at positions 6, 9, and 13. Residue K13 is modified to N6-acetyl-N6-methyllysine; alternate. The DNA-binding element occupies 17–21; sequence KRHRK. Position 92 is an N6-glutaryllysine (K92).

It belongs to the histone H4 family. As to quaternary structure, the nucleosome is a histone octamer containing two molecules each of H2A, H2B, H3 and H4 assembled in one H3-H4 heterotetramer and two H2A-H2B heterodimers. The octamer wraps approximately 147 bp of DNA. Glutarylation at Lys-92 (H4K91glu) destabilizes nucleosomes by promoting dissociation of the H2A-H2B dimers from nucleosomes.

It is found in the nucleus. It localises to the chromosome. Its function is as follows. Core component of nucleosome. Nucleosomes wrap and compact DNA into chromatin, limiting DNA accessibility to the cellular machineries which require DNA as a template. Histones thereby play a central role in transcription regulation, DNA repair, DNA replication and chromosomal stability. DNA accessibility is regulated via a complex set of post-translational modifications of histones, also called histone code, and nucleosome remodeling. This chain is Histone H4 (ahsb4), found in Blastobotrys adeninivorans (Yeast).